A 370-amino-acid polypeptide reads, in one-letter code: Probable endopolygalacturonase A (370 aa).

The N-terminal stretch at 1–19 (MPSAKPLFCLATLAGAALA) is a signal peptide. The propeptide occupies 20-32 (APAPSRATDFNKR). A disulfide bridge links Cys-35 with Cys-50. PbH1 repeat units lie at residues 162–192 (SDNLVIEDVTIDNSDGDSEGGHNTDGFDISE), 193–214 (STYITITGATVKNQDDCVAINS), 215–235 (GENIYFSGGTCSGGHGLSIGS), 244–265 (VKNVTFIDSTVSDSENGVRIKT), 273–295 (VEDITYSNIQLSGISDYGIVIEQ), and 307–352 (SNGV…DITG). Asp-207 acts as the Proton donor in catalysis. A disulfide bridge connects residues Cys-209 and Cys-225. His-229 is a catalytic residue. An N-linked (GlcNAc...) asparagine glycan is attached at Asn-246. 2 disulfide bridges follow: Cys-335–Cys-340 and Cys-359–Cys-368.

The protein belongs to the glycosyl hydrolase 28 family.

It is found in the secreted. It catalyses the reaction (1,4-alpha-D-galacturonosyl)n+m + H2O = (1,4-alpha-D-galacturonosyl)n + (1,4-alpha-D-galacturonosyl)m.. In terms of biological role, involved in maceration and soft-rotting of plant tissue. Hydrolyzes the 1,4-alpha glycosidic bonds of de-esterified pectate in the smooth region of the plant cell wall. In Aspergillus kawachii (strain NBRC 4308) (White koji mold), this protein is Probable endopolygalacturonase A (pgaA).